The chain runs to 161 residues: Phosphopantetheine adenylyltransferase (161 aa).

Serine 8 serves as a coordination point for substrate. Residues 8-9 and histidine 16 each bind ATP; that span reads SF. Residues lysine 40, threonine 72, and arginine 86 each contribute to the substrate site. ATP-binding positions include 87–89, glutamate 97, and 122–128; these read GLR and HSFLSSS.

Belongs to the bacterial CoaD family. In terms of assembly, homohexamer. It depends on Mg(2+) as a cofactor.

It localises to the cytoplasm. The catalysed reaction is (R)-4'-phosphopantetheine + ATP + H(+) = 3'-dephospho-CoA + diphosphate. It participates in cofactor biosynthesis; coenzyme A biosynthesis; CoA from (R)-pantothenate: step 4/5. Functionally, reversibly transfers an adenylyl group from ATP to 4'-phosphopantetheine, yielding dephospho-CoA (dPCoA) and pyrophosphate. This is Phosphopantetheine adenylyltransferase from Gloeobacter violaceus (strain ATCC 29082 / PCC 7421).